The sequence spans 432 residues: Adenylosuccinate synthetase (432 aa).

Residues Gly13 to Lys19 and Gly41 to Thr43 each bind GTP. Residue Asp14 is the Proton acceptor of the active site. Residues Asp14 and Gly41 each coordinate Mg(2+). Residues Asp14 to Lys17, Asn39 to His42, Thr130, Arg144, Gln225, Thr240, and Arg304 contribute to the IMP site. The Proton donor role is filled by His42. Residue Ala300–Arg306 coordinates substrate. Residues Arg306, Lys332–Asp334, and Ser415–Gly417 each bind GTP.

Belongs to the adenylosuccinate synthetase family. Homodimer. It depends on Mg(2+) as a cofactor.

Its subcellular location is the cytoplasm. The enzyme catalyses IMP + L-aspartate + GTP = N(6)-(1,2-dicarboxyethyl)-AMP + GDP + phosphate + 2 H(+). Its pathway is purine metabolism; AMP biosynthesis via de novo pathway; AMP from IMP: step 1/2. Functionally, plays an important role in the de novo pathway of purine nucleotide biosynthesis. Catalyzes the first committed step in the biosynthesis of AMP from IMP. This chain is Adenylosuccinate synthetase, found in Klebsiella pneumoniae (strain 342).